Consider the following 107-residue polypeptide: U1-lycotoxin-Ls1l (107 aa).

A signal peptide spans 1–20 (MMKVLVVVALLVTLISYSSS). The propeptide occupies 21 to 41 (EGIDDLEADELLSLMANEQTR). 4 disulfide bridges follow: cysteine 44-cysteine 59, cysteine 51-cysteine 68, cysteine 58-cysteine 86, and cysteine 70-cysteine 84.

Belongs to the neurotoxin 19 (CSTX) family. 04 (U1-Lctx) subfamily. As to expression, expressed by the venom gland.

It localises to the secreted. The protein is U1-lycotoxin-Ls1l of Lycosa singoriensis (Wolf spider).